We begin with the raw amino-acid sequence, 359 residues long: Halocin-H4 (359 aa).

Residues 1–46 form the signal peptide; that stretch reads MSKDRDGRRTSRRGTLKKIGGFSLGALSFGAVGRTQAATGSSVTTA. 2 disordered regions span residues 40 to 59 and 340 to 359; these read GSSV…DPKS and IPDR…SRKQ.

The protein localises to the secreted. In terms of biological role, has antibacterial activity against other haloarchaeons. Interacts with the membrane of the target cells where it causes permeability changes that result in an ionic imbalance leading to cell lysis and death. This is Halocin-H4 (halH4) from Haloferax mediterranei (strain ATCC 33500 / DSM 1411 / JCM 8866 / NBRC 14739 / NCIMB 2177 / R-4) (Halobacterium mediterranei).